An 80-amino-acid polypeptide reads, in one-letter code: MKLSAVLLAIALLALSLVQCLGLPDPSTKCVMECDTQEYRSICAADDKGSTKTYRNLCVMKTENCLQNANFQKISDKECP.

The first 22 residues, 1–22 (MKLSAVLLAIALLALSLVQCLG), serve as a signal peptide directing secretion. Positions 24–80 (PDPSTKCVMECDTQEYRSICAADDKGSTKTYRNLCVMKTENCLQNANFQKISDKECP) constitute a Kazal-like domain. Intrachain disulfides connect cysteine 30–cysteine 65, cysteine 34–cysteine 58, and cysteine 43–cysteine 79.

As to quaternary structure, interacts with wg; the interaction facilitates short-range diffusion of wg. Strongly expressed in the developing fly wing but is excluded from the presumptive wing margin.

The protein resides in the secreted. In terms of biological role, increases short-range diffusion of the wingless/wg protein, enhancing its signaling and expression of target genes required for wing margin morphogenesis. May act as a serine protease inhibitor since it possess the Kazal serine protease inhibitor signature. The polypeptide is Protein pegasus (Drosophila melanogaster (Fruit fly)).